Reading from the N-terminus, the 281-residue chain is 2-dehydro-3-deoxyphosphooctonate aldolase (281 aa).

Belongs to the KdsA family.

It is found in the cytoplasm. The enzyme catalyses D-arabinose 5-phosphate + phosphoenolpyruvate + H2O = 3-deoxy-alpha-D-manno-2-octulosonate-8-phosphate + phosphate. It functions in the pathway carbohydrate biosynthesis; 3-deoxy-D-manno-octulosonate biosynthesis; 3-deoxy-D-manno-octulosonate from D-ribulose 5-phosphate: step 2/3. The protein operates within bacterial outer membrane biogenesis; lipopolysaccharide biosynthesis. The protein is 2-dehydro-3-deoxyphosphooctonate aldolase of Pseudomonas fluorescens (strain Pf0-1).